The primary structure comprises 437 residues: GTPase Der (437 aa).

2 EngA-type G domains span residues 3-168 (PLIA…PVQE) and 178-353 (TNLA…ENRS). Residues 9–16 (GRPNVGKS), 56–60 (DTGGY), 120–123 (NKVE), 184–191 (GRPNVGKS), 231–235 (DTAGL), and 296–299 (NKWD) each bind GTP. One can recognise a KH-like domain in the interval 354–437 (RKITTSALNR…VTVSLRFFKK (84 aa)).

The protein belongs to the TRAFAC class TrmE-Era-EngA-EngB-Septin-like GTPase superfamily. EngA (Der) GTPase family. In terms of assembly, associates with the 50S ribosomal subunit.

Its function is as follows. GTPase that plays an essential role in the late steps of ribosome biogenesis. The sequence is that of GTPase Der from Chlorobium phaeobacteroides (strain DSM 266 / SMG 266 / 2430).